Consider the following 45-residue polypeptide: Large ribosomal subunit protein bL34 (45 aa).

Residues 1–45 (MTKRTFGGTSRKRKRVSGFRVRMRSHTGRRVIKSRRQKGRERIAV) are disordered. A compositionally biased stretch (basic residues) spans 10-39 (SRKRKRVSGFRVRMRSHTGRRVIKSRRQKG).

The protein belongs to the bacterial ribosomal protein bL34 family.

In Prochlorococcus marinus (strain MIT 9301), this protein is Large ribosomal subunit protein bL34.